The sequence spans 28 residues: ALWKDILKNVGKAAGKAVLNTVTDMVNE.

In terms of tissue distribution, expressed by the skin glands.

It localises to the secreted. Has antimicrobial activity. This is Dermaseptin-2.2TR from Phyllomedusa trinitatis (Trinidad leaf frog).